Consider the following 549-residue polypeptide: Glucose-6-phosphate isomerase (549 aa).

E355 acts as the Proton donor in catalysis. Catalysis depends on residues H386 and K514.

Belongs to the GPI family.

It localises to the cytoplasm. It catalyses the reaction alpha-D-glucose 6-phosphate = beta-D-fructose 6-phosphate. It participates in carbohydrate biosynthesis; gluconeogenesis. Its pathway is carbohydrate degradation; glycolysis; D-glyceraldehyde 3-phosphate and glycerone phosphate from D-glucose: step 2/4. In terms of biological role, catalyzes the reversible isomerization of glucose-6-phosphate to fructose-6-phosphate. The polypeptide is Glucose-6-phosphate isomerase (Enterobacter sp. (strain 638)).